Here is a 450-residue protein sequence, read N- to C-terminus: Glucose-6-phosphate isomerase (450 aa).

The active-site Proton donor is Glu290. Catalysis depends on residues His311 and Lys425.

Belongs to the GPI family.

The protein resides in the cytoplasm. The catalysed reaction is alpha-D-glucose 6-phosphate = beta-D-fructose 6-phosphate. It participates in carbohydrate biosynthesis; gluconeogenesis. It functions in the pathway carbohydrate degradation; glycolysis; D-glyceraldehyde 3-phosphate and glycerone phosphate from D-glucose: step 2/4. Its function is as follows. Catalyzes the reversible isomerization of glucose-6-phosphate to fructose-6-phosphate. In Limosilactobacillus fermentum (Lactobacillus fermentum), this protein is Glucose-6-phosphate isomerase.